We begin with the raw amino-acid sequence, 237 residues long: MQKQAELYRGKAKTVYSTENPDLLVLEFRNDTSAGDGARIEQFDRKGMVNNKFNHFIMTKLAEAGIPTQMEQLLSDTECLVKKLDMVPVECVVRNRAAGSLVKRLGIEEGIELNPPLFDLFLKNDAMHDPMVNDSYCETFGWVSKENLARMKELTYKANDVLKKLFDDAGLILVDFKLEFGLYKGEVVLGDEFSPDGSRLWDKETLDKMDKDRFRQSLGGLIEAYETVARRLGVQLD.

It belongs to the SAICAR synthetase family.

The enzyme catalyses 5-amino-1-(5-phospho-D-ribosyl)imidazole-4-carboxylate + L-aspartate + ATP = (2S)-2-[5-amino-1-(5-phospho-beta-D-ribosyl)imidazole-4-carboxamido]succinate + ADP + phosphate + 2 H(+). Its pathway is purine metabolism; IMP biosynthesis via de novo pathway; 5-amino-1-(5-phospho-D-ribosyl)imidazole-4-carboxamide from 5-amino-1-(5-phospho-D-ribosyl)imidazole-4-carboxylate: step 1/2. The protein is Phosphoribosylaminoimidazole-succinocarboxamide synthase of Citrobacter koseri (strain ATCC BAA-895 / CDC 4225-83 / SGSC4696).